The chain runs to 151 residues: 6,7-dimethyl-8-ribityllumazine synthase (151 aa).

5-amino-6-(D-ribitylamino)uracil-binding positions include Phe-15, 49-51, and 73-75; these read AVE and AVI. Residue 78–79 participates in (2S)-2-hydroxy-3-oxobutyl phosphate binding; the sequence is ET. The active-site Proton donor is the His-81. 5-amino-6-(D-ribitylamino)uracil is bound at residue Phe-106. Arg-120 contacts (2S)-2-hydroxy-3-oxobutyl phosphate.

Belongs to the DMRL synthase family. As to quaternary structure, forms an icosahedral capsid composed of 60 subunits, arranged as a dodecamer of pentamers.

The catalysed reaction is (2S)-2-hydroxy-3-oxobutyl phosphate + 5-amino-6-(D-ribitylamino)uracil = 6,7-dimethyl-8-(1-D-ribityl)lumazine + phosphate + 2 H2O + H(+). It functions in the pathway cofactor biosynthesis; riboflavin biosynthesis; riboflavin from 2-hydroxy-3-oxobutyl phosphate and 5-amino-6-(D-ribitylamino)uracil: step 1/2. Its function is as follows. Catalyzes the formation of 6,7-dimethyl-8-ribityllumazine by condensation of 5-amino-6-(D-ribitylamino)uracil with 3,4-dihydroxy-2-butanone 4-phosphate. This is the penultimate step in the biosynthesis of riboflavin. The chain is 6,7-dimethyl-8-ribityllumazine synthase from Coxiella burnetii (strain Dugway 5J108-111).